The chain runs to 336 residues: Ornithine carbamoyltransferase, catabolic (336 aa).

Carbamoyl phosphate contacts are provided by residues 62 to 65 (STRT), Gln-89, Arg-113, and 140 to 143 (HPTQ). Residues Asn-172, Asp-236, and 240 to 241 (SM) contribute to the L-ornithine site. Carbamoyl phosphate is bound by residues 277–278 (CL) and Arg-322.

Belongs to the aspartate/ornithine carbamoyltransferase superfamily. OTCase family.

It is found in the cytoplasm. The catalysed reaction is carbamoyl phosphate + L-ornithine = L-citrulline + phosphate + H(+). It functions in the pathway amino-acid degradation; L-arginine degradation via ADI pathway; carbamoyl phosphate from L-arginine: step 2/2. In terms of biological role, reversibly catalyzes the transfer of the carbamoyl group from carbamoyl phosphate (CP) to the N(epsilon) atom of ornithine (ORN) to produce L-citrulline. The polypeptide is Ornithine carbamoyltransferase, catabolic (arcB) (Staphylococcus aureus (strain N315)).